We begin with the raw amino-acid sequence, 160 residues long: MAPK regulated corepressor interacting protein 2 (160 aa).

Met-1 is subject to N-acetylmethionine. Residues 1-22 (MYTITKGPSKLVAQRRTGPTQQ) are disordered. Position 35 is an omega-N-methylarginine (Arg-35). Positions 43–64 (LPAHLQPSAQTQGPWPLASSGP) are disordered. Ser-61 carries the phosphoserine modification. Arg-65 is subject to Omega-N-methylarginine. Phosphoserine is present on Ser-82.

Belongs to the MCRIP family. Interacts with DDX6. Interacts with MCRIP1.

The protein resides in the cytoplasm. The protein localises to the stress granule. It localises to the nucleus. The protein is MAPK regulated corepressor interacting protein 2 (Mcrip2) of Mus musculus (Mouse).